The following is a 444-amino-acid chain: ATP-dependent protease ATPase subunit HslU (444 aa).

ATP is bound by residues Ile-18, 60–65 (GVGKTE), Asp-257, Glu-322, and Arg-394.

This sequence belongs to the ClpX chaperone family. HslU subfamily. In terms of assembly, a double ring-shaped homohexamer of HslV is capped on each side by a ring-shaped HslU homohexamer. The assembly of the HslU/HslV complex is dependent on binding of ATP.

The protein localises to the cytoplasm. In terms of biological role, ATPase subunit of a proteasome-like degradation complex; this subunit has chaperone activity. The binding of ATP and its subsequent hydrolysis by HslU are essential for unfolding of protein substrates subsequently hydrolyzed by HslV. HslU recognizes the N-terminal part of its protein substrates and unfolds these before they are guided to HslV for hydrolysis. This chain is ATP-dependent protease ATPase subunit HslU, found in Psychromonas ingrahamii (strain DSM 17664 / CCUG 51855 / 37).